We begin with the raw amino-acid sequence, 288 residues long: Glandicoline B O-methyltransferase roqN (288 aa).

S-adenosyl-L-methionine is bound by residues T57, D82, and D109–A110.

Belongs to the class I-like SAM-binding methyltransferase superfamily.

It carries out the reaction glandicoline B + S-adenosyl-L-methionine = meleagrin + S-adenosyl-L-homocysteine + H(+). It participates in alkaloid biosynthesis. Glandicoline B O-methyltransferase; part of the gene cluster that mediates the biosynthesis of the mycotoxin meleagrin. The first stage is catalyzed by the dipeptide synthase roqA which condenses histidine and tryptophan to produce histidyltryptophanyldiketopiperazine (HTD). HTD is then converted to roquefortine C through two possible pathways. In the first pathway, prenyltransferase roqD transforms HTD to the intermediate roquefortine D, which is in turn converted to roquefortine C by the cytochrome P450 monooxygenase roqR. In the second pathway, HTD is first converted to the intermediate dehydrohistidyltryptophanyldi-ketopiperazine (DHTD) by roqR which is then prenylated by roqD to form roquefortine C. Roquefortine C can be further transformed to meleagrin via three more reactions including oxydation to glandicolin A by roqM, which is further reduced to glandicoline B by roqO. Finally, glandicoline B is converted to meleagrin by the glandicoline B O-methyltransferase roqN. More studies identified further branching and additional metabolites produced by the roquefortine/meleagrin cluster, including roquefortine F, roquefortine L, roquefortine M, roquefortine N and neoxaline. This Penicillium rubens (strain ATCC 28089 / DSM 1075 / NRRL 1951 / Wisconsin 54-1255) (Penicillium chrysogenum) protein is Glandicoline B O-methyltransferase roqN.